The primary structure comprises 819 residues: Protein ecdysoneless homolog (819 aa).

5 disordered regions span residues 494-558 (ENDR…LIND), 578-603 (FNEK…DNIS), 617-680 (TDNN…DDEK), 725-749 (DDIE…DEDD), and 778-819 (GFAG…KENK). 3 stretches are compositionally biased toward low complexity: residues 501–514 (QQKQ…QQQN), 524–551 (NNNN…NNNN), and 581–592 (KSGNSKNKTKSS). The segment covering 624–680 (DDYDDDDDDDDDMYQDIDNYEDSDDKDDDEDDENDEDDEDDGFEEYEDEDEDDDDEK) has biased composition (acidic residues). The segment covering 730-740 (SNNNNNNNINN) has biased composition (low complexity). Residues 797 to 819 (KREKKKTSSKKLIPKKGKVKENK) are compositionally biased toward basic residues.

Belongs to the ECD family.

May act as a transcriptional activator. This Dictyostelium discoideum (Social amoeba) protein is Protein ecdysoneless homolog (ecd).